Here is a 168-residue protein sequence, read N- to C-terminus: Dihydrofolate reductase (168 aa).

In terms of domain architecture, DHFR spans 1–159; the sequence is MISFIFAMDA…YDYEFLMYEK (159 aa). 5–7 is a binding site for substrate; it reads IFA. NADP(+)-binding positions include 6 to 7 and 14 to 19; these read FA and IGKDND. Residue aspartate 27 participates in substrate binding. 43 to 46 is a binding site for NADP(+); the sequence is GRKT. Arginine 57 contacts substrate. Residues 62–65 and 95–100 each bind NADP(+); these read VTSA and IGGAQL. Threonine 114 serves as a coordination point for substrate.

Belongs to the dihydrofolate reductase family.

It catalyses the reaction (6S)-5,6,7,8-tetrahydrofolate + NADP(+) = 7,8-dihydrofolate + NADPH + H(+). The protein operates within cofactor biosynthesis; tetrahydrofolate biosynthesis; 5,6,7,8-tetrahydrofolate from 7,8-dihydrofolate: step 1/1. Functionally, key enzyme in folate metabolism. Catalyzes an essential reaction for de novo glycine and purine synthesis, and for DNA precursor synthesis. This chain is Dihydrofolate reductase (dfrA), found in Bacillus subtilis (strain 168).